Consider the following 106-residue polypeptide: MASAKIKKGDSVVVLSGKDKGKTGTVAKVMPKEGKVVVEGVNMIARHRKPSQENPQGGIDRYEAPMHIAKVAVADPKDGKPTRVRIEEKDGKKVRVAVKSGETIDG.

The protein belongs to the universal ribosomal protein uL24 family. Part of the 50S ribosomal subunit.

Its function is as follows. One of two assembly initiator proteins, it binds directly to the 5'-end of the 23S rRNA, where it nucleates assembly of the 50S subunit. In terms of biological role, one of the proteins that surrounds the polypeptide exit tunnel on the outside of the subunit. In Erythrobacter litoralis (strain HTCC2594), this protein is Large ribosomal subunit protein uL24.